Consider the following 172-residue polypeptide: Large ribosomal subunit protein uL10 (172 aa).

This sequence belongs to the universal ribosomal protein uL10 family. Part of the ribosomal stalk of the 50S ribosomal subunit. The N-terminus interacts with L11 and the large rRNA to form the base of the stalk. The C-terminus forms an elongated spine to which L12 dimers bind in a sequential fashion forming a multimeric L10(L12)X complex.

In terms of biological role, forms part of the ribosomal stalk, playing a central role in the interaction of the ribosome with GTP-bound translation factors. This is Large ribosomal subunit protein uL10 from Macrococcus caseolyticus (strain JCSC5402) (Macrococcoides caseolyticum).